Here is a 179-residue protein sequence, read N- to C-terminus: ATP synthase subunit delta (179 aa).

It belongs to the ATPase delta chain family. As to quaternary structure, F-type ATPases have 2 components, F(1) - the catalytic core - and F(0) - the membrane proton channel. F(1) has five subunits: alpha(3), beta(3), gamma(1), delta(1), epsilon(1). F(0) has three main subunits: a(1), b(2) and c(10-14). The alpha and beta chains form an alternating ring which encloses part of the gamma chain. F(1) is attached to F(0) by a central stalk formed by the gamma and epsilon chains, while a peripheral stalk is formed by the delta and b chains.

It is found in the cell membrane. Functionally, f(1)F(0) ATP synthase produces ATP from ADP in the presence of a proton or sodium gradient. F-type ATPases consist of two structural domains, F(1) containing the extramembraneous catalytic core and F(0) containing the membrane proton channel, linked together by a central stalk and a peripheral stalk. During catalysis, ATP synthesis in the catalytic domain of F(1) is coupled via a rotary mechanism of the central stalk subunits to proton translocation. This protein is part of the stalk that links CF(0) to CF(1). It either transmits conformational changes from CF(0) to CF(1) or is implicated in proton conduction. The polypeptide is ATP synthase subunit delta (Mycoplasmopsis pulmonis (strain UAB CTIP) (Mycoplasma pulmonis)).